A 329-amino-acid chain; its full sequence is Intradiol ring-cleavage dioxygenase hqdA (329 aa).

Y167, Y201, H225, and H227 together coordinate Fe cation.

It belongs to the intradiol ring-cleavage dioxygenase family. In terms of assembly, homodimer. It depends on Fe(3+) as a cofactor.

The enzyme catalyses catechol + O2 = cis,cis-muconate + 2 H(+). The catalysed reaction is benzene-1,2,4-triol + O2 = maleylacetate + 2 H(+). Functionally, intradiol ring-cleavage dioxygenase involved in an alternative pathway to the protocatechuic acid pathway since it is active on hydroxyquinol and catechol but not on protocatechuic acid. The polypeptide is Intradiol ring-cleavage dioxygenase hqdA (Aspergillus niger (strain ATCC MYA-4892 / CBS 513.88 / FGSC A1513)).